We begin with the raw amino-acid sequence, 330 residues long: FKBP12-interacting protein of 37 kDa (330 aa).

At Met-1 the chain carries N-acetylmethionine. The span at Met-1–Gly-12 shows a compositional bias: acidic residues. The segment at Met-1 to Thr-43 is disordered. Polar residues predominate over residues Ala-17–Arg-26. Positions Ser-56–Val-308 form a coiled coil.

Belongs to the fl(2)d family. Forms homodimers. Interacts with MTA/EMB1706. Interacts with FKBP12; interaction is inhibited by the immunosuppressive drug FK506. Interacts with VIR. Associates with MTA, MTB, VIR and HAKAI to form the m6A writer complex which is essential for adenosine methylation at specific mRNA sequences. As to expression, ubiquitously expressed with higher levels in primary and lateral roots, leaves, trichomes, and in pollen grains (at protein level).

It is found in the nucleus speckle. The protein resides in the nucleus. It localises to the nucleoplasm. In terms of biological role, probable regulatory subunit of the N6-methyltransferase complex, a multiprotein complex that mediates N6-methyladenosine (m6A) methylation at the 5'-[AG]GAC-3' consensus sites of some mRNAs. Associates with MTA, MTB, VIR and HAKAI to form the m6A writer complex which is essential for adenosine methylation at specific mRNA sequences. N6-methyladenosine (m6A) plays a role in mRNA stability, processing, translation efficiency and editing. Essential protein required during endosperm development and embryogenesis. Involved in endoreduplication, especially in trichomes. May play a role in splicing events. The polypeptide is FKBP12-interacting protein of 37 kDa (Arabidopsis thaliana (Mouse-ear cress)).